Reading from the N-terminus, the 121-residue chain is Type II secretion system protein I (121 aa).

The propeptide at 1-6 (MKKQSG) is leader sequence. Methionine 7 carries the N-methylmethionine modification. The chain crosses the membrane as a helical span at residues 7 to 27 (MTLIEVMVALVVFALAGLAVM).

Belongs to the GSP I family. As to quaternary structure, type II secretion is composed of four main components: the outer membrane complex, the inner membrane complex, the cytoplasmic secretion ATPase and the periplasm-spanning pseudopilus. Interacts with core component PulG. In terms of processing, cleaved by prepilin peptidase. Methylated by prepilin peptidase at the amino group of the N-terminal methionine once the leader sequence is cleaved by prepilin peptidase.

Its subcellular location is the cell inner membrane. Functionally, component of the type II secretion system required for the energy-dependent secretion of extracellular factors such as proteases and toxins from the periplasm. Part of the pseudopilus tip complex that is critical for the recognition and binding of secretion substrates. The sequence is that of Type II secretion system protein I (pulI) from Klebsiella pneumoniae.